Here is a 124-residue protein sequence, read N- to C-terminus: Fluoride-specific ion channel FluC (124 aa).

4 consecutive transmembrane segments (helical) span residues 2–22 (LNIA…RWLI), 35–55 (TGTL…IAWF), 71–91 (TGFC…VALF), and 100–120 (LGTM…AFWL). Positions 75 and 78 each coordinate Na(+).

This sequence belongs to the fluoride channel Fluc/FEX (TC 1.A.43) family.

Its subcellular location is the cell inner membrane. It carries out the reaction fluoride(in) = fluoride(out). Its activity is regulated as follows. Na(+) is not transported, but it plays an essential structural role and its presence is essential for fluoride channel function. Functionally, fluoride-specific ion channel. Important for reducing fluoride concentration in the cell, thus reducing its toxicity. The protein is Fluoride-specific ion channel FluC of Proteus mirabilis (strain HI4320).